A 312-amino-acid polypeptide reads, in one-letter code: Urease accessory protein UreD (312 aa).

The tract at residues 1-50 is disordered; sequence MRPLAPDARCAPSRPGRGPWYARRPVTTPSDPPAALREPPPPARRAGKAG.

Belongs to the UreD family. In terms of assembly, ureD, UreF and UreG form a complex that acts as a GTP-hydrolysis-dependent molecular chaperone, activating the urease apoprotein by helping to assemble the nickel containing metallocenter of UreC. The UreE protein probably delivers the nickel.

It localises to the cytoplasm. Its function is as follows. Required for maturation of urease via the functional incorporation of the urease nickel metallocenter. The chain is Urease accessory protein UreD from Sorangium cellulosum (strain So ce56) (Polyangium cellulosum (strain So ce56)).